A 190-amino-acid polypeptide reads, in one-letter code: Vascular endothelial growth factor A (190 aa).

The signal sequence occupies residues 1–26 (MNFLLSWVHWSLALLLYLHHAKWSQA). 3 disulfides stabilise this stretch: cysteine 51–cysteine 93, cysteine 82–cysteine 127, and cysteine 86–cysteine 129. Asparagine 100 carries N-linked (GlcNAc...) asparagine glycosylation.

It belongs to the PDGF/VEGF growth factor family. In terms of assembly, homodimer; disulfide-linked. Also found as heterodimer with PGF. Interacts with NRP1. Interacts with BSG. Interacts with CD82; this interaction inhibits VEGFA-mediated signaling pathway.

Its subcellular location is the secreted. In terms of biological role, growth factor active in angiogenesis, vasculogenesis and endothelial cell growth. Induces endothelial cell proliferation, promotes cell migration, inhibits apoptosis and induces permeabilization of blood vessels. Binds to the FLT1/VEGFR1 and KDR/VEGFR2 receptors, heparan sulfate and heparin. Binding to NRP1 receptor initiates a signaling pathway needed for motor neuron axon guidance and cell body migration, including for the caudal migration of facial motor neurons from rhombomere 4 to rhombomere 6 during embryonic development. Also binds the DEAR/FBXW7-AS1 receptor. This is Vascular endothelial growth factor A (VEGFA) from Bos taurus (Bovine).